A 351-amino-acid polypeptide reads, in one-letter code: Phosphoribosylformylglycinamidine cyclo-ligase (351 aa).

The protein belongs to the AIR synthase family.

It localises to the cytoplasm. The catalysed reaction is 2-formamido-N(1)-(5-O-phospho-beta-D-ribosyl)acetamidine + ATP = 5-amino-1-(5-phospho-beta-D-ribosyl)imidazole + ADP + phosphate + H(+). It functions in the pathway purine metabolism; IMP biosynthesis via de novo pathway; 5-amino-1-(5-phospho-D-ribosyl)imidazole from N(2)-formyl-N(1)-(5-phospho-D-ribosyl)glycinamide: step 2/2. In Oleidesulfovibrio alaskensis (strain ATCC BAA-1058 / DSM 17464 / G20) (Desulfovibrio alaskensis), this protein is Phosphoribosylformylglycinamidine cyclo-ligase.